The following is a 158-amino-acid chain: MSLNLPGYALFFILLVASSGAKPAPDLQILEPPLSSLEEQEEMQEEVQEKVQEQQEEVQEKVQEQQEEVQEQQEEVQEQQEEQQEEVQERGRGTGDVLLRAQLDSSTWALQKDDVLMRLFKDLLRTSKRSRSRYKKGGLRSCFGVRLARIGSFSGLGC.

Residues 1-21 (MSLNLPGYALFFILLVASSGA) form the signal peptide. A propeptide spanning residues 22 to 136 (KPAPDLQILE…SKRSRSRYKK (115 aa)) is cleaved from the precursor. The tract at residues 32-95 (PPLSSLEEQE…EVQERGRGTG (64 aa)) is disordered. Basic and acidic residues predominate over residues 47–64 (VQEKVQEQQEEVQEKVQE). The segment covering 65–86 (QQEEVQEQQEEVQEQQEEQQEE) has biased composition (acidic residues). Residues cysteine 142 and cysteine 158 are joined by a disulfide bond.

Belongs to the natriuretic peptide family.

The protein localises to the secreted. In terms of biological role, exhibits natriuretic and vasodepressant activity. Has cGMP-stimulating activity. May help to regulate body fluid homeostasis in a variety of aquatic environments. This is C-type natriuretic peptide 3 from Takifugu rubripes (Japanese pufferfish).